Reading from the N-terminus, the 242-residue chain is Putative pyrimidine-specific ribonucleoside hydrolase RihB (242 aa).

Substrate contacts are provided by Gln-156 and His-168.

Belongs to the IUNH family. RihB subfamily.

It catalyses the reaction a pyrimidine ribonucleoside + H2O = a pyrimidine nucleobase + D-ribose. The chain is Putative pyrimidine-specific ribonucleoside hydrolase RihB (rihB) from Shigella boydii serotype 4 (strain Sb227).